The sequence spans 355 residues: Methylthioribose-1-phosphate isomerase (355 aa).

Residues arginine 50–alanine 52, arginine 93, and glutamine 198 contribute to the substrate site. Aspartate 239 acts as the Proton donor in catalysis. Asparagine 249–lysine 250 contributes to the substrate binding site.

The protein belongs to the eIF-2B alpha/beta/delta subunits family. MtnA subfamily. Homodimer.

The enzyme catalyses 5-(methylsulfanyl)-alpha-D-ribose 1-phosphate = 5-(methylsulfanyl)-D-ribulose 1-phosphate. The protein operates within amino-acid biosynthesis; L-methionine biosynthesis via salvage pathway; L-methionine from S-methyl-5-thio-alpha-D-ribose 1-phosphate: step 1/6. Catalyzes the interconversion of methylthioribose-1-phosphate (MTR-1-P) into methylthioribulose-1-phosphate (MTRu-1-P). The polypeptide is Methylthioribose-1-phosphate isomerase (Geobacillus thermodenitrificans (strain NG80-2)).